We begin with the raw amino-acid sequence, 307 residues long: Aspartate carbamoyltransferase catalytic subunit (307 aa).

Residues Arg55 and Thr56 each contribute to the carbamoyl phosphate site. Lys85 provides a ligand contact to L-aspartate. Arg106, His134, and Gln137 together coordinate carbamoyl phosphate. 2 residues coordinate L-aspartate: Arg167 and Arg228. The carbamoyl phosphate site is built by Leu266 and Pro267.

The protein belongs to the aspartate/ornithine carbamoyltransferase superfamily. ATCase family. In terms of assembly, heterododecamer (2C3:3R2) of six catalytic PyrB chains organized as two trimers (C3), and six regulatory PyrI chains organized as three dimers (R2).

It carries out the reaction carbamoyl phosphate + L-aspartate = N-carbamoyl-L-aspartate + phosphate + H(+). It functions in the pathway pyrimidine metabolism; UMP biosynthesis via de novo pathway; (S)-dihydroorotate from bicarbonate: step 2/3. Its function is as follows. Catalyzes the condensation of carbamoyl phosphate and aspartate to form carbamoyl aspartate and inorganic phosphate, the committed step in the de novo pyrimidine nucleotide biosynthesis pathway. The polypeptide is Aspartate carbamoyltransferase catalytic subunit (Tolumonas auensis (strain DSM 9187 / NBRC 110442 / TA 4)).